We begin with the raw amino-acid sequence, 340 residues long: N-acetyl-gamma-glutamyl-phosphate reductase (340 aa).

Cys-151 is an active-site residue.

Belongs to the NAGSA dehydrogenase family. Type 1 subfamily.

It is found in the cytoplasm. It catalyses the reaction N-acetyl-L-glutamate 5-semialdehyde + phosphate + NADP(+) = N-acetyl-L-glutamyl 5-phosphate + NADPH + H(+). It functions in the pathway amino-acid biosynthesis; L-arginine biosynthesis; N(2)-acetyl-L-ornithine from L-glutamate: step 3/4. Catalyzes the NADPH-dependent reduction of N-acetyl-5-glutamyl phosphate to yield N-acetyl-L-glutamate 5-semialdehyde. In Aquifex aeolicus (strain VF5), this protein is N-acetyl-gamma-glutamyl-phosphate reductase.